A 634-amino-acid polypeptide reads, in one-letter code: Chaperone protein DnaK (634 aa).

At threonine 193 the chain carries Phosphothreonine; by autocatalysis. The segment at 597–634 (GNANNTSSTESTTTNNNNEEDSKVVDSDYQEIDKKDGK) is disordered. A compositionally biased stretch (low complexity) spans 600-613 (NNTSSTESTTTNNN). The segment covering 616–634 (EDSKVVDSDYQEIDKKDGK) has biased composition (basic and acidic residues).

This sequence belongs to the heat shock protein 70 family.

Acts as a chaperone. The sequence is that of Chaperone protein DnaK from Ehrlichia canis (strain Jake).